The following is a 119-amino-acid chain: Fluoride-specific ion channel FluC (119 aa).

The next 4 membrane-spanning stretches (helical) occupy residues Ile5–Ala25, Leu30–Phe50, Trp59–Leu79, and Ser92–Leu112. 2 residues coordinate Na(+): Gly69 and Thr72.

The protein belongs to the fluoride channel Fluc/FEX (TC 1.A.43) family.

It localises to the cell inner membrane. It catalyses the reaction fluoride(in) = fluoride(out). Na(+) is not transported, but it plays an essential structural role and its presence is essential for fluoride channel function. In terms of biological role, fluoride-specific ion channel. Important for reducing fluoride concentration in the cell, thus reducing its toxicity. This Neisseria meningitidis serogroup A / serotype 4A (strain DSM 15465 / Z2491) protein is Fluoride-specific ion channel FluC.